Reading from the N-terminus, the 823-residue chain is Protein Jade-3 (823 aa).

The disordered stretch occupies residues Met-1–Lys-32. Positions Ser-8 to Ser-25 are enriched in low complexity. N6-acetyllysine is present on residues Lys-30 and Lys-32. Ser-85 carries the phosphoserine modification. The segment at Asp-200–Gly-250 adopts a PHD-type 1 zinc-finger fold. The C2HC pre-PHD-type zinc-finger motif lies at Tyr-252 to Val-286. The segment at Leu-310–Ser-366 adopts a PHD-type 2 zinc-finger fold. 2 disordered regions span residues Leu-372–Leu-395 and Lys-542–Ile-576. Residues Asp-561–Ser-575 are compositionally biased toward low complexity. Ser-566 is subject to Phosphoserine. Lys-601 is modified (N6-acetyllysine). Ser-608 is subject to Phosphoserine. The interval Leu-609–Cys-630 is disordered. Lys-638 carries the post-translational modification N6-acetyllysine. Polar residues-rich tracts occupy residues Ser-650 to Ala-664 and Trp-673 to Ser-684. The disordered stretch occupies residues Ser-650–Ser-684. The residue at position 735 (Lys-735) is an N6-acetyllysine. The segment at Arg-758–Arg-823 is disordered. Phosphoserine is present on residues Ser-774, Ser-776, and Ser-780. The span at Asp-781–Gly-809 shows a compositional bias: basic and acidic residues.

Belongs to the JADE family. Component of the HBO1 complex composed at least of ING4 or ING5, KAT7/HBO1, MEAF6, and one of JADE1, JADE2 and JADE3. In terms of tissue distribution, ubiquitously expressed, with highest levels in placenta and uterus.

Scaffold subunit of some HBO1 complexes, which have a histone H4 acetyltransferase activity. This Homo sapiens (Human) protein is Protein Jade-3 (JADE3).